We begin with the raw amino-acid sequence, 732 residues long: X-ray repair cross-complementing protein 5 (732 aa).

The 153-residue stretch at 9-161 (AVVLCVDVGV…CNLKKSGISL (153 aa)) folds into the VWFA domain. Positions 138–165 (LSSPFSQDQLDVIICNLKKSGISLQFFL) are leucine-zipper. Lysine 195 participates in a covalent cross-link: Glycyl lysine isopeptide (Lys-Gly) (interchain with G-Cter in SUMO2). The Ku domain maps to 253–453 (IGPNLSIKIV…CTPTEAQLSA (201 aa)). Serine 258 bears the Phosphoserine mark. Lysine 265 carries the post-translational modification N6-acetyllysine. Serine 318 carries the phosphoserine modification. Position 332 is an N6-acetyllysine (lysine 332). Residues lysine 532 and lysine 534 each participate in a glycyl lysine isopeptide (Lys-Gly) (interchain with G-Cter in SUMO2) cross-link. At threonine 535 the chain carries Phosphothreonine. Residues lysine 567 and lysine 569 each participate in a glycyl lysine isopeptide (Lys-Gly) (interchain with G-Cter in SUMO2) cross-link. Phosphoserine; by PRKDC occurs at positions 578, 580, and 581. The residue at position 666 (lysine 666) is an N6-acetyllysine. Residues lysine 670 and lysine 689 each participate in a glycyl lysine isopeptide (Lys-Gly) (interchain with G-Cter in SUMO2) cross-link. The segment at 708 to 732 (PKDKAKEDTTGPEEAGDVDDLLDMI) is disordered. Residue threonine 716 is modified to Phosphothreonine; by PRKDC. The span at 717–732 (TGPEEAGDVDDLLDMI) shows a compositional bias: acidic residues. An EEXXXDL motif motif is present at residues 720 to 728 (EEAGDVDDL).

It belongs to the ku80 family. In terms of assembly, heterodimer composed of XRCC5/Ku80 and XRCC6/Ku70. Component of the core long-range non-homologous end joining (NHEJ) complex (also named DNA-PK complex) composed of PRKDC, LIG4, XRCC4, XRCC6/Ku70, XRCC5/Ku86 and NHEJ1/XLF. Additional component of the NHEJ complex includes PAXX. Following autophosphorylation, PRKDC dissociates from DNA, leading to formation of the short-range NHEJ complex, composed of LIG4, XRCC4, XRCC6/Ku70, XRCC5/Ku86 and NHEJ1/XLF. The XRCC5-XRCC6 dimer also associates with NAA15, and this complex displays DNA binding activity towards the osteocalcin FGF response element (OCFRE). In addition, XRCC5 binds to the osteoblast-specific transcription factors MSX2 and RUNX2. Interacts with ELF3. Interacts with APLF (via KBM motif). The XRCC5/XRCC6 dimer associates in a DNA-dependent manner with APEX1. Identified in a complex with DEAF1 and XRCC6. Interacts with NR4A3; the DNA-dependent protein kinase complex DNA-PK phosphorylates and activates NR4A3 and prevents NR4A3 ubiquitinylation and degradation. Interacts with RNF138. Interacts with CYREN (via KBM motif). Interacts with WRN (via KBM motif). Interacts (via N-terminus) with HSF1 (via N-terminus); this interaction is direct and prevents XRCC5/XRCC6 heterodimeric binding and non-homologous end joining (NHEJ) repair activities induced by ionizing radiation (IR). Interacts with DHX9; this interaction occurs in a RNA-dependent manner. Part of the HDP-RNP complex composed of at least HEXIM1, PRKDC, XRCC5, XRCC6, paraspeckle proteins (SFPQ, NONO, PSPC1, RBM14, and MATR3) and NEAT1 RNA. Interacts with ERCC6. Interacts with ATF7. The XRCC5-XRCC6 dimer associates with ALKBH2. Interacts with TPRN; TPRN interacts with a number of DNA damage response proteins, is recruited to sites of DNA damage and may play a role in DNA damage repair. Interacts with ERCC6L2. Post-translationally, ADP-ribosylated by PARP3. Phosphorylated on serine residues. Phosphorylation by PRKDC may enhance helicase activity. In terms of processing, sumoylated. Post-translationally, ubiquitinated by RNF8 via 'Lys-48'-linked ubiquitination following DNA damage, leading to its degradation and removal from DNA damage sites. Ubiquitinated by RNF138, leading to remove the Ku complex from DNA breaks.

The protein localises to the nucleus. Its subcellular location is the nucleolus. It is found in the chromosome. Single-stranded DNA-dependent ATP-dependent helicase that plays a key role in DNA non-homologous end joining (NHEJ) by recruiting DNA-PK to DNA. Required for double-strand break repair and V(D)J recombination. Also has a role in chromosome translocation. The DNA helicase II complex binds preferentially to fork-like ends of double-stranded DNA in a cell cycle-dependent manner. It works in the 3'-5' direction. During NHEJ, the XRCC5-XRRC6 dimer performs the recognition step: it recognizes and binds to the broken ends of the DNA and protects them from further resection. Binding to DNA may be mediated by XRCC6. The XRCC5-XRRC6 dimer acts as a regulatory subunit of the DNA-dependent protein kinase complex DNA-PK by increasing the affinity of the catalytic subunit PRKDC to DNA by 100-fold. The XRCC5-XRRC6 dimer is probably involved in stabilizing broken DNA ends and bringing them together. The assembly of the DNA-PK complex to DNA ends is required for the NHEJ ligation step. The XRCC5-XRRC6 dimer probably also acts as a 5'-deoxyribose-5-phosphate lyase (5'-dRP lyase), by catalyzing the beta-elimination of the 5' deoxyribose-5-phosphate at an abasic site near double-strand breaks. XRCC5 probably acts as the catalytic subunit of 5'-dRP activity, and allows to 'clean' the termini of abasic sites, a class of nucleotide damage commonly associated with strand breaks, before such broken ends can be joined. The XRCC5-XRRC6 dimer together with APEX1 acts as a negative regulator of transcription. In association with NAA15, the XRCC5-XRRC6 dimer binds to the osteocalcin promoter and activates osteocalcin expression. As part of the DNA-PK complex, involved in the early steps of ribosome assembly by promoting the processing of precursor rRNA into mature 18S rRNA in the small-subunit processome. Binding to U3 small nucleolar RNA, recruits PRKDC and XRCC5/Ku86 to the small-subunit processome. Plays a role in the regulation of DNA virus-mediated innate immune response by assembling into the HDP-RNP complex, a complex that serves as a platform for IRF3 phosphorylation and subsequent innate immune response activation through the cGAS-STING pathway. This Mus musculus (Mouse) protein is X-ray repair cross-complementing protein 5 (Xrcc5).